We begin with the raw amino-acid sequence, 607 residues long: Elongation factor 4 (607 aa).

Positions 11–193 constitute a tr-type G domain; it reads SKIRNFSIIA…QIVEKVPAPT (183 aa). GTP-binding positions include 23–28 and 140–143; these read DHGKST and NKID.

Belongs to the TRAFAC class translation factor GTPase superfamily. Classic translation factor GTPase family. LepA subfamily.

Its subcellular location is the cell membrane. It catalyses the reaction GTP + H2O = GDP + phosphate + H(+). Required for accurate and efficient protein synthesis under certain stress conditions. May act as a fidelity factor of the translation reaction, by catalyzing a one-codon backward translocation of tRNAs on improperly translocated ribosomes. Back-translocation proceeds from a post-translocation (POST) complex to a pre-translocation (PRE) complex, thus giving elongation factor G a second chance to translocate the tRNAs correctly. Binds to ribosomes in a GTP-dependent manner. The polypeptide is Elongation factor 4 (Bacillus anthracis (strain A0248)).